Consider the following 109-residue polypeptide: Large ribosomal subunit protein uL22 (109 aa).

The protein belongs to the universal ribosomal protein uL22 family. Part of the 50S ribosomal subunit.

Functionally, this protein binds specifically to 23S rRNA; its binding is stimulated by other ribosomal proteins, e.g. L4, L17, and L20. It is important during the early stages of 50S assembly. It makes multiple contacts with different domains of the 23S rRNA in the assembled 50S subunit and ribosome. The globular domain of the protein is located near the polypeptide exit tunnel on the outside of the subunit, while an extended beta-hairpin is found that lines the wall of the exit tunnel in the center of the 70S ribosome. This chain is Large ribosomal subunit protein uL22, found in Polaromonas naphthalenivorans (strain CJ2).